The chain runs to 258 residues: MNVTASLSRRPLGCLKAGLCQSLIRGYATAVAASTTQSTGALPDHNFFRIADKHTKKTRTAFAVFTPPKSPTTLPPSSVVTKSKAFKIANSKLPPLMTKPPSDPMPLLTQQQIARMDPTGARTALFSKARHAARVGDVLMVTHRRGGEPFAGVCLAIRRSGIDTAILLRNHLGKVGVEMWYKIYNKNVAGIEIIKRRAKRARRAKLMYMRQPKHDMGSVEQYVFAWKKMRKVLSSKGLTGGVGGGGGKQKGQESKKKN.

A disordered region spans residues 235 to 258; sequence SKGLTGGVGGGGGKQKGQESKKKN. The span at 238-249 shows a compositional bias: gly residues; that stretch reads LTGGVGGGGGKQ.

The protein belongs to the bacterial ribosomal protein bL19 family. In terms of assembly, component of the mitochondrial large ribosomal subunit (mt-LSU). Mature N.crassa 74S mitochondrial ribosomes consist of a small (37S) and a large (54S) subunit. The 37S small subunit contains a 16S ribosomal RNA (16S mt-rRNA) and 32 different proteins. The 54S large subunit contains a 23S rRNA (23S mt-rRNA) and 42 different proteins.

Its subcellular location is the mitochondrion. Component of the mitochondrial ribosome (mitoribosome), a dedicated translation machinery responsible for the synthesis of mitochondrial genome-encoded proteins, including at least some of the essential transmembrane subunits of the mitochondrial respiratory chain. The mitoribosomes are attached to the mitochondrial inner membrane and translation products are cotranslationally integrated into the membrane. The polypeptide is Large ribosomal subunit protein bL19m (img1) (Neurospora crassa (strain ATCC 24698 / 74-OR23-1A / CBS 708.71 / DSM 1257 / FGSC 987)).